Consider the following 2027-residue polypeptide: MWTPTEEEKYGVVICSFRGSVPQGLVLEIGETVQILEKCEGWYRGVSTKKPNVKGLFPANYIHLKKAIVSNRGQYETVVPLEDSIVTEVTTTLQEWASLWKQLYVKHKVDLFYKLRHVMNELIDLRRQLLSGHLTQDQVREVKRHITVRLDWGNEHLGLDLVPRKDFEVVDSDQISVSDLYKMHLSSRQSVQQSTSQVDTMRPRHGETCRMPVPYHFFFSLKSFTYNTIGEDSDVFFSLYDMREGKQISERFLVRLNKNGGPRNPEKIERMCALFTDLSSKDMKRDLYIVAHVIRIGRMLLNDSKKGPAHLHYRRPYGCAVLSILDVLQSLTELKEEKDFVLKVYTCNNESEWTQIHENIIRKSSTKYSAPSASHGLIISLQLFRGDMEQIRRENPMIFNRGLAITRKLGFPDVIMPGDIRNDLYLTLEKGDFERGGKSVQKNIEVTMYVLYADGEILKDCISLGSGEPNRSSYHSFVLYHSNSPRWGEIIKLPIPIDRFRGSHLRFEFRHCSTKDKGEKKLFGFAFSPLMRDDGTTLSDDIHELYVYKCDENSTFNNHALYLGLPCCKEDYNGCPNIPSSLIFQRSKESFFISTQLSSTKLTQNVDLLALLKWKAFPDRIMDILGRLRHVSGEEIVKFLQDILDTLFVILDDNTEKYGLLVFQSLVFIINLLRDIKYFHFRPVMDTYIQKHFAGALAYKELIRCLKWYMDCSAELIRQDHIQEAMRALEYLFKFIVQSRILYSRATCGMEEEQFRSSIQELFQSIRFVLSLDSRNSETLLFTQAALLNSFPTIFDELLQMFTVQEVAEFVRGTLGSMPSTVHIGQSMDVVKLQSIARTVDSRLFSFSESRRILLPVVLHHIHLHLRQQKELLICSGILGSIFSIVKTSSLEADVMEEVEMMVESLLDVLLQTLLTIMSKSHAQEAVRGHCPVTAEITGEYVSCLLSLLRQMCDTHFQHLLDNFQSKDELKEFLLKIFCVFRNLMKMSVFPRDWMVMRLLTSNIIVTTVQYLSSALHKNFTETDFDFKVWNSYFSLAVLFINQPSLQLEIITSAKRKKILDKYGDMRVMMAYELFSMWQNLGEHKIHFIPGMIGPFLGVTLVPQPEVRNIMIPIFHDMMDWEQRKNGNFKQVEAELIDKLDSMVSEGKGDESYRELFGLLTQLFGPYPSLLEKVEQETWRETGISFVTSVTRLMERLLDYRDCMKGEETENKKVGCTVNLMNFYKSEINKEEMYIRYIHKLCDMHLQAENYTEAAFTLLLYCELLQWEDRPLREFLHYPSQTEWQRKEGLCRKIIHYFNKGKSWEFGIPLCRELACQYESLYDYQSLSWIRKMEASYYDNIIEQQRLEPEFFRVGFYGRKFPFFLRNKEYVCRGHDYERLEAFQQRMLSEFPQAVAMQHPNHPDDAILQCDAQYLQIYAVTPIPDYVDVLQMDRVPDRVKSFYRVNNVRKFRYDRPFHKGPKDKDNEFKSLWIERTTLTLTHSLPGISRWFEVERRELVEVSPLENAIQVVENKNQELRALISQYQHKQVHGNINLLSMCLNGVIDAAVNGGIARYQEAFFDKDYITKHPGDAEKISQLKELMQEQVHVLGVGLAVHEKFVHPEMRPLHKKLIDQFQMMRASLYHEFPGLDKLSPACSGTSTPRGNVLASHSPMSPENIKMTHRHSPMNLMGTGRHSSSSLSSHASSEAGNMMMMGDNSMGEAPEDLYHHMQLAYHNPRYQGSVTNVSVLSSSQASPSSSSLSSTHSAPSQMITSAPSSTRGSPSLPDKYRHAREMMLLLPTHRDRPSSAMYPAAILENGQPPNFQRALFQQVVGACKPCSDPNLSMAEKGHYSLHFDAFHHPLGDTPPALPARTLRKSPLHPIPASPTSPQSGLDGSNSTLSGSASSGVSSLSESNFGHSSEAPPRTDTMDSMPSQAWNGDEGLEPPYLPVHYSLSESAVLDAIKSQPCRSHSAPGCVLPQDPMDPPALPPKPYHPRLPALEHDEGMLLREEAERPRGLHRKASLPPGSVKEEQARLAWEHGRGEQ.

An SH3 domain is found at 6 to 67; it reads EEEKYGVVIC…PANYIHLKKA (62 aa). A C2 DOCK-type domain is found at 421 to 598; sequence RNDLYLTLEK…ESFFISTQLS (178 aa). The region spanning 1225–1632 is the DOCKER domain; sequence KSEINKEEMY…LYHEFPGLDK (408 aa). Residue Ser-1655 is modified to Phosphoserine. 4 disordered regions span residues 1672 to 1695, 1731 to 1768, 1846 to 1925, and 1971 to 2027; these read GTGR…MMMM, SSSQ…SLPD, DTPP…DEGL, and PPKP…RGEQ. Composition is skewed to low complexity over residues 1676 to 1695 and 1731 to 1751; these read HSSS…MMMM and SSSQ…APSQ. A compositionally biased stretch (polar residues) spans 1752–1763; sequence MITSAPSSTRGS. Residues 1877 to 1899 are compositionally biased toward low complexity; the sequence is GSNSTLSGSASSGVSSLSESNFG. Residues 1967 to 1973 carry the SH3-binding motif; it reads PPALPPK. 2 stretches are compositionally biased toward basic and acidic residues: residues 1981–1998 and 2011–2027; these read ALEH…ERPR and VKEE…RGEQ.

It belongs to the DOCK family. In terms of assembly, interacts with presenilin proteins PSEN1 and PSEN2. Interacts with CRK. Expressed in brain, spinal cord, pituitary gland, testis. Not expressed in heart, liver, kidney, spleen and lung. In brain, it is highly expressed in the cerebral cortex and hippocampus, while it is absent in other tissues, except in spinal cord. In the cerebral cortex, it is found within the intermediate (III and IV) and deep (V and VI) layers, whereas it is weakly expressed in superficial layer I. It is also abundant in the piriform cortex. Within the hippocampus, it is expressed in the pyramidal neurons of the CA1, CA2, and CA3 regions and the dentate gyrus.

The protein localises to the cytoplasm. Functionally, potential guanine nucleotide exchange factor (GEF). GEF proteins activate some small GTPases by exchanging bound GDP for free GTP. Its interaction with presenilin proteins as well as its ability to stimulate Tau/MAPT phosphorylation suggest that it may be involved in Alzheimer disease. Ectopic expression in nerve cells decreases the secretion of amyloid-beta APBA1 protein and lowers the rate of cell-substratum adhesion, suggesting that it may affect the function of some small GTPase involved in the regulation of actin cytoskeleton or cell adhesion receptors. This chain is Dedicator of cytokinesis protein 3 (Dock3), found in Mus musculus (Mouse).